A 217-amino-acid polypeptide reads, in one-letter code: Somatotropin (217 aa).

The N-terminal stretch at 1–27 (MMAAGPRASLLLAFALLCLPWTQEVGA) is a signal peptide. A Zn(2+)-binding site is contributed by His46. Cys79 and Cys190 are disulfide-bonded. Ser132 bears the Phosphoserine mark. Residue Glu199 participates in Zn(2+) binding. An intrachain disulfide couples Cys207 to Cys215.

It belongs to the somatotropin/prolactin family.

The protein localises to the secreted. Functionally, plays an important role in growth control. Its major role in stimulating body growth is to stimulate the liver and other tissues to secrete IGF1. It stimulates both the differentiation and proliferation of myoblasts. It also stimulates amino acid uptake and protein synthesis in muscle and other tissues. The protein is Somatotropin (GH1) of Cervus elaphus (Red deer).